A 276-amino-acid chain; its full sequence is NH(3)-dependent NAD(+) synthetase (276 aa).

47 to 54 (GISGGQDS) contacts ATP. Asp53 is a binding site for Mg(2+). Position 141 (Arg141) interacts with deamido-NAD(+). Thr161 lines the ATP pocket. Residue Glu166 participates in Mg(2+) binding. The deamido-NAD(+) site is built by Lys174 and Asp181. Positions 190 and 212 each coordinate ATP. 261-262 (HK) provides a ligand contact to deamido-NAD(+).

It belongs to the NAD synthetase family. Homodimer.

The catalysed reaction is deamido-NAD(+) + NH4(+) + ATP = AMP + diphosphate + NAD(+) + H(+). Its pathway is cofactor biosynthesis; NAD(+) biosynthesis; NAD(+) from deamido-NAD(+) (ammonia route): step 1/1. Catalyzes the ATP-dependent amidation of deamido-NAD to form NAD. Uses ammonia as a nitrogen source. The protein is NH(3)-dependent NAD(+) synthetase of Levilactobacillus brevis (strain ATCC 367 / BCRC 12310 / CIP 105137 / JCM 1170 / LMG 11437 / NCIMB 947 / NCTC 947) (Lactobacillus brevis).